We begin with the raw amino-acid sequence, 578 residues long: Cholesterol oxidase (578 aa).

FAD is bound by residues G15, E34, G85, A90, and V230. The Proton acceptor role is filled by H470. Residue G503 coordinates FAD. The segment at 529-551 (WPNKGETDRRPPQGEPYRRLAPI) is disordered. Residues 533–546 (GETDRRPPQGEPYR) are compositionally biased toward basic and acidic residues.

The protein belongs to the GMC oxidoreductase family. Requires FAD as cofactor.

The protein localises to the secreted. It catalyses the reaction cholesterol + O2 = cholest-5-en-3-one + H2O2. It carries out the reaction cholest-5-en-3-one = cholest-4-en-3-one. Its pathway is steroid metabolism; cholesterol degradation. Its function is as follows. Bifunctional enzyme that catalyzes the oxidation and isomerization of cholesterol to cholestenone (cholest-4-en-3-one), an initial step in the cholesterol degradation process. Contributes to virulence. The polypeptide is Cholesterol oxidase (choD) (Mycobacterium tuberculosis (strain CDC 1551 / Oshkosh)).